A 426-amino-acid chain; its full sequence is Cell adhesion molecule CEACAM16 (426 aa).

An N-terminal signal peptide occupies residues 1 to 22 (MKMPLTWYSWFLLSAWILNTGA). The N-linked (GlcNAc...) asparagine glycan is linked to Asn-38. Positions 77-96 (ETPGPAHTGREAVRPDGSLD) are disordered. Residues 84 to 95 (TGREAVRPDGSL) are compositionally biased toward basic and acidic residues. 2 Ig-like C2-type domains span residues 134–219 (PPTV…LNLT) and 224–310 (PERV…ASVV). Cys-155 and Cys-202 are oxidised to a cystine. An N-linked (GlcNAc...) asparagine glycan is attached at Asn-217. Cys-253 and Cys-294 are joined by a disulfide.

The protein belongs to the immunoglobulin superfamily. CEA family. Homooligomer; can for homodimers and homotetramers. Interacts with TECTA and TECTB. As to expression, expressed in cochlear outer hair cells (OHC).

The protein localises to the secreted. In terms of biological role, required for proper hearing, plays a role in maintaining the integrity of the tectorial membrane. This chain is Cell adhesion molecule CEACAM16, found in Mus musculus (Mouse).